Here is a 109-residue protein sequence, read N- to C-terminus: Cortistatin (109 aa).

The N-terminal stretch at 1–25 (MMGGRGTGGKWPSAFGLLLLWGVAA) is a signal peptide. The propeptide occupies 26–93 (SALPLESGPT…PPPQQPPHLD (68 aa)). Residues 64-97 (ASSSTPVGGGTPGLSKSQERPPPQQPPHLDKKPC) form a disordered region. Cysteines 97 and 108 form a disulfide.

The protein belongs to the somatostatin family. In terms of tissue distribution, expressed in a subset of GABAergic cells in the cortex and hippocampus.

The protein resides in the secreted. The polypeptide is Cortistatin (Cort) (Mus musculus (Mouse)).